A 616-amino-acid polypeptide reads, in one-letter code: Chaperone protein HtpG (616 aa).

Residues 1–333 (MKKQFDTEVN…CQDLPLNVSR (333 aa)) form an a; substrate-binding region. Residues 334 to 542 (EILQQNKILS…SNDPTYQMQK (209 aa)) form a b region. A c region spans residues 543–616 (IMLSMGQEVK…INEFIEKDFL (74 aa)).

This sequence belongs to the heat shock protein 90 family. As to quaternary structure, homodimer.

It is found in the cytoplasm. Molecular chaperone. Has ATPase activity. This chain is Chaperone protein HtpG, found in Borreliella burgdorferi (strain ATCC 35210 / DSM 4680 / CIP 102532 / B31) (Borrelia burgdorferi).